A 163-amino-acid polypeptide reads, in one-letter code: Nucleotide-binding protein RHA1_ro01989 (163 aa).

Belongs to the YajQ family.

Its function is as follows. Nucleotide-binding protein. The protein is Nucleotide-binding protein RHA1_ro01989 of Rhodococcus jostii (strain RHA1).